A 121-amino-acid polypeptide reads, in one-letter code: Large ribosomal subunit protein bL12 (121 aa).

Belongs to the bacterial ribosomal protein bL12 family. As to quaternary structure, homodimer. Part of the ribosomal stalk of the 50S ribosomal subunit. Forms a multimeric L10(L12)X complex, where L10 forms an elongated spine to which 2 to 4 L12 dimers bind in a sequential fashion. Binds GTP-bound translation factors.

Functionally, forms part of the ribosomal stalk which helps the ribosome interact with GTP-bound translation factors. Is thus essential for accurate translation. In Psychromonas ingrahamii (strain DSM 17664 / CCUG 51855 / 37), this protein is Large ribosomal subunit protein bL12.